We begin with the raw amino-acid sequence, 194 residues long: uncharacterized protein (194 aa).

Positions 6 to 66 constitute an HTH tetR-type domain; it reads SGKYEKILQA…AIAENLLTHT (61 aa). Positions 29–48 form a DNA-binding region, H-T-H motif; that stretch reads SISDIVKKAGTAQGTFYLYF.

This is an uncharacterized protein from Bacillus subtilis (strain 168).